The chain runs to 548 residues: ATP synthase subunit alpha (548 aa).

Residue 172–179 (GDRKTGKT) coordinates ATP.

The protein belongs to the ATPase alpha/beta chains family. F-type ATPases have 2 components, CF(1) - the catalytic core - and CF(0) - the membrane proton channel. CF(1) has five subunits: alpha(3), beta(3), gamma(1), delta(1), epsilon(1). CF(0) has three main subunits: a(1), b(2) and c(9-12). The alpha and beta chains form an alternating ring which encloses part of the gamma chain. CF(1) is attached to CF(0) by a central stalk formed by the gamma and epsilon chains, while a peripheral stalk is formed by the delta and b chains.

Its subcellular location is the cell membrane. The enzyme catalyses ATP + H2O + 4 H(+)(in) = ADP + phosphate + 5 H(+)(out). In terms of biological role, produces ATP from ADP in the presence of a proton gradient across the membrane. The alpha chain is a regulatory subunit. The sequence is that of ATP synthase subunit alpha from Mycobacteroides abscessus (strain ATCC 19977 / DSM 44196 / CCUG 20993 / CIP 104536 / JCM 13569 / NCTC 13031 / TMC 1543 / L948) (Mycobacterium abscessus).